A 254-amino-acid polypeptide reads, in one-letter code: E3 ubiquitin-protein ligase NEURL3 (254 aa).

In terms of domain architecture, NHR spans Ala-17–Pro-174. The segment at Cys-197–Arg-236 adopts an RING-type zinc-finger fold.

As to expression, expressed in alveolar epithelial type II cells.

It is found in the cytoplasm. The enzyme catalyses S-ubiquitinyl-[E2 ubiquitin-conjugating enzyme]-L-cysteine + [acceptor protein]-L-lysine = [E2 ubiquitin-conjugating enzyme]-L-cysteine + N(6)-ubiquitinyl-[acceptor protein]-L-lysine.. The protein operates within protein modification; protein ubiquitination. In terms of biological role, E3 ubiquitin-protein ligase that plays a role in various biological processes such as lung development or innate immunity. Seems to utilize UBE2E1. Promotes innate antiviral response by catalyzing 'Lys-63'-linked ubiquitination of IRF7. Plays an essential role in TLR4-mediated activation of MAPK pathways by promoting 'Lys-48'-linked polyubiquitination of the phosphatase DUSP1/MKP1. The chain is E3 ubiquitin-protein ligase NEURL3 (Neurl3) from Mus musculus (Mouse).